Here is a 143-residue protein sequence, read N- to C-terminus: Cofilin (143 aa).

Residues glycine 5–serine 137 enclose the ADF-H domain.

Belongs to the actin-binding proteins ADF family.

Its subcellular location is the cytoplasm. It is found in the cytoskeleton. It localises to the nucleus matrix. In terms of biological role, controls reversibly actin polymerization and depolymerization in a pH-sensitive manner. It has the ability to bind G- and F-actin in a 1:1 ratio of cofilin to actin. Binding to F-actin is regulated by tropomyosin. It is the major component of intranuclear and cytoplasmic actin rods. Required for accumulation of actin at the cell division site via depolymerizing actin at the cell ends. In association with myosin II has a role in the assembly of the contractile ring via severing actin filaments. Involved in the maintenance of the contractile ring once formed. In association with profilin and capping protein, has a role in the mitotic reorganization of the actin cytoskeleton. The sequence is that of Cofilin (COF1) from Eremothecium gossypii (strain ATCC 10895 / CBS 109.51 / FGSC 9923 / NRRL Y-1056) (Yeast).